The following is a 141-amino-acid chain: Large ribosomal subunit protein uL11c (141 aa).

This sequence belongs to the universal ribosomal protein uL11 family. Part of the ribosomal stalk of the 50S ribosomal subunit. Interacts with L10 and the large rRNA to form the base of the stalk. L10 forms an elongated spine to which L12 dimers bind in a sequential fashion forming a multimeric L10(L12)X complex.

The protein resides in the plastid. It localises to the chloroplast. Functionally, forms part of the ribosomal stalk which helps the ribosome interact with GTP-bound translation factors. This Trieres chinensis (Marine centric diatom) protein is Large ribosomal subunit protein uL11c.